The primary structure comprises 281 residues: Transcription factor lfc1 (281 aa).

Residues 60-87 (CLTCRMKKIKCDETKPTCARCTHGQREC) constitute a DNA-binding region (zn(2)-C6 fungal-type).

The protein localises to the nucleus. Functionally, transcription factor that acts as a negative regulator of basidioma development via repressing the expression of genes involved in basidioma development, including hydrophobins such as Hyd-1 and Hyd-8, lectins such as JRL1, as well as the fruiting body differentiation gene FVFD16. This is Transcription factor lfc1 from Flammulina velutipes (Agaricus velutipes).